Consider the following 493-residue polypeptide: Glycogen synthase 1 (493 aa).

Lys-15 contacts ADP-alpha-D-glucose.

This sequence belongs to the glycosyltransferase 1 family. Bacterial/plant glycogen synthase subfamily.

It catalyses the reaction [(1-&gt;4)-alpha-D-glucosyl](n) + ADP-alpha-D-glucose = [(1-&gt;4)-alpha-D-glucosyl](n+1) + ADP + H(+). It participates in glycan biosynthesis; glycogen biosynthesis. In terms of biological role, synthesizes alpha-1,4-glucan chains using ADP-glucose. The sequence is that of Glycogen synthase 1 from Methylococcus capsulatus (strain ATCC 33009 / NCIMB 11132 / Bath).